The sequence spans 489 residues: Betaine aldehyde dehydrogenase (489 aa).

K(+) contacts are provided by T26 and D93. Residue 150-152 coordinates NAD(+); the sequence is GAW. K162 serves as the catalytic Charge relay system. An NAD(+)-binding site is contributed by 176–179; sequence KPSE. V180 provides a ligand contact to K(+). 229-232 contributes to the NAD(+) binding site; the sequence is GVET. Residue L245 participates in K(+) binding. E251 functions as the Proton acceptor in the catalytic mechanism. NAD(+) is bound by residues G253, C285, and E386. Residue C285 is the Nucleophile of the active site. C285 bears the Cysteine sulfenic acid (-SOH) mark. 2 residues coordinate K(+): K456 and G459. E463 (charge relay system) is an active-site residue.

The protein belongs to the aldehyde dehydrogenase family. In terms of assembly, dimer of dimers. K(+) is required as a cofactor.

It carries out the reaction betaine aldehyde + NAD(+) + H2O = glycine betaine + NADH + 2 H(+). Its pathway is amine and polyamine biosynthesis; betaine biosynthesis via choline pathway; betaine from betaine aldehyde: step 1/1. In terms of biological role, involved in the biosynthesis of the osmoprotectant glycine betaine. Catalyzes the irreversible oxidation of betaine aldehyde to the corresponding acid. The polypeptide is Betaine aldehyde dehydrogenase (Burkholderia pseudomallei (strain K96243)).